The following is a 356-amino-acid chain: Malate dehydrogenase, glyoxysomal (356 aa).

The transit peptide at 1-36 directs the protein to the glyoxysome; it reads MQPIPDVNQRIARISAHLHPPKYQMEESSVLRRANC. Residues 51–57 and Asp-77 each bind NAD(+); that span reads GAAGGIG. Residues Arg-124 and Arg-130 each contribute to the substrate site. Residues Asn-137 and 160-162 contribute to the NAD(+) site; that span reads ISN. The substrate site is built by Asn-162 and Arg-196. His-220 (proton acceptor) is an active-site residue. Met-271 provides a ligand contact to NAD(+).

It belongs to the LDH/MDH superfamily. MDH type 1 family. Homodimer.

It is found in the glyoxysome. The catalysed reaction is (S)-malate + NAD(+) = oxaloacetate + NADH + H(+). This chain is Malate dehydrogenase, glyoxysomal (MDHG), found in Cucumis sativus (Cucumber).